Reading from the N-terminus, the 225-residue chain is RNA chaperone ProQ (225 aa).

The segment at 103 to 173 (LEEAKARVQT…APREERHTPV (71 aa)) is disordered. The segment covering 109–118 (RVQTQRAAQQ) has biased composition (low complexity). Positions 137–146 (RERKPRPQQP) are enriched in basic residues. Residues 147–156 (RRKEGAEQRK) show a composition bias toward basic and acidic residues.

The protein belongs to the ProQ family.

The protein resides in the cytoplasm. Its function is as follows. RNA chaperone with significant RNA binding, RNA strand exchange and RNA duplexing activities. May regulate ProP activity through an RNA-based, post-transcriptional mechanism. This Klebsiella pneumoniae (strain 342) protein is RNA chaperone ProQ.